The primary structure comprises 160 residues: 6,7-dimethyl-8-ribityllumazine synthase (160 aa).

Residues F23, 61–63 (SFE), and 85–87 (AVI) each bind 5-amino-6-(D-ribitylamino)uracil. 90 to 91 (DT) serves as a coordination point for (2S)-2-hydroxy-3-oxobutyl phosphate. The Proton donor role is filled by H93. A 5-amino-6-(D-ribitylamino)uracil-binding site is contributed by F118. R132 contacts (2S)-2-hydroxy-3-oxobutyl phosphate.

Belongs to the DMRL synthase family.

It catalyses the reaction (2S)-2-hydroxy-3-oxobutyl phosphate + 5-amino-6-(D-ribitylamino)uracil = 6,7-dimethyl-8-(1-D-ribityl)lumazine + phosphate + 2 H2O + H(+). It functions in the pathway cofactor biosynthesis; riboflavin biosynthesis; riboflavin from 2-hydroxy-3-oxobutyl phosphate and 5-amino-6-(D-ribitylamino)uracil: step 1/2. Its function is as follows. Catalyzes the formation of 6,7-dimethyl-8-ribityllumazine by condensation of 5-amino-6-(D-ribitylamino)uracil with 3,4-dihydroxy-2-butanone 4-phosphate. This is the penultimate step in the biosynthesis of riboflavin. The sequence is that of 6,7-dimethyl-8-ribityllumazine synthase from Parasynechococcus marenigrum (strain WH8102).